Here is a 36-residue protein sequence, read N- to C-terminus: Cytochrome b6-f complex subunit 5 (36 aa).

Residues Leu5 to Ala25 form a helical membrane-spanning segment.

The protein belongs to the PetG family. As to quaternary structure, the 4 large subunits of the cytochrome b6-f complex are cytochrome b6, subunit IV (17 kDa polypeptide, PetD), cytochrome f and the Rieske protein, while the 4 small subunits are PetG, PetL, PetM and PetN. The complex functions as a dimer.

The protein resides in the cellular thylakoid membrane. Its function is as follows. Component of the cytochrome b6-f complex, which mediates electron transfer between photosystem II (PSII) and photosystem I (PSI), cyclic electron flow around PSI, and state transitions. PetG is required for either the stability or assembly of the cytochrome b6-f complex. This chain is Cytochrome b6-f complex subunit 5, found in Acaryochloris marina (strain MBIC 11017).